Reading from the N-terminus, the 375-residue chain is Phospho-N-acetylmuramoyl-pentapeptide-transferase (375 aa).

A run of 10 helical transmembrane segments spans residues 2-22 (IGLLIGGVLGLVLSAAGTPLF), 55-75 (AVIIGSLVLAYLITHGLLAVL), 82-102 (PTASGLILLLLTVGMAFVGFV), 120-140 (GKIILQALIGTAFAVLALNFP), 158-178 (IPWLDLAFAGPAIGVILFVIW), 198-218 (GLATGATAMITGAYVLISLFQ), 237-257 (PMDLALLAAILTGSLLGFLWW), 264-284 (IFMGDTGSLGLGGALAGFAIF), 289-309 (ILVAVLAGLMVAITLSVIIQV), and 345-365 (WLLSLMCVTVGLAIFYGDWLI).

This sequence belongs to the glycosyltransferase 4 family. MraY subfamily. It depends on Mg(2+) as a cofactor.

The protein resides in the cell membrane. It catalyses the reaction UDP-N-acetyl-alpha-D-muramoyl-L-alanyl-gamma-D-glutamyl-meso-2,6-diaminopimeloyl-D-alanyl-D-alanine + di-trans,octa-cis-undecaprenyl phosphate = di-trans,octa-cis-undecaprenyl diphospho-N-acetyl-alpha-D-muramoyl-L-alanyl-D-glutamyl-meso-2,6-diaminopimeloyl-D-alanyl-D-alanine + UMP. It participates in cell wall biogenesis; peptidoglycan biosynthesis. Functionally, catalyzes the initial step of the lipid cycle reactions in the biosynthesis of the cell wall peptidoglycan: transfers peptidoglycan precursor phospho-MurNAc-pentapeptide from UDP-MurNAc-pentapeptide onto the lipid carrier undecaprenyl phosphate, yielding undecaprenyl-pyrophosphoryl-MurNAc-pentapeptide, known as lipid I. This is Phospho-N-acetylmuramoyl-pentapeptide-transferase from Micrococcus luteus (strain ATCC 4698 / DSM 20030 / JCM 1464 / CCM 169 / CCUG 5858 / IAM 1056 / NBRC 3333 / NCIMB 9278 / NCTC 2665 / VKM Ac-2230) (Micrococcus lysodeikticus).